Here is a 738-residue protein sequence, read N- to C-terminus: Polyribonucleotide nucleotidyltransferase (738 aa).

Mg(2+) is bound by residues D528 and D534. The KH domain maps to 594-653 (PRVVRVKIPVQKIGELIGPKGKVINSIQDETGAEISIEDDGTVYIGSSQADSSEKAVAMV). The region spanning 665 to 737 (GSQFLGTVVK…DRGKLCLVAV (73 aa)) is the S1 motif domain.

The protein belongs to the polyribonucleotide nucleotidyltransferase family. Requires Mg(2+) as cofactor.

It is found in the cytoplasm. The enzyme catalyses RNA(n+1) + phosphate = RNA(n) + a ribonucleoside 5'-diphosphate. In terms of biological role, involved in mRNA degradation. Catalyzes the phosphorolysis of single-stranded polyribonucleotides processively in the 3'- to 5'-direction. The polypeptide is Polyribonucleotide nucleotidyltransferase (Tropheryma whipplei (strain Twist) (Whipple's bacillus)).